Here is a 210-residue protein sequence, read N- to C-terminus: Ribosomal RNA large subunit methyltransferase E (210 aa).

The S-adenosyl-L-methionine site is built by glycine 61, tryptophan 63, aspartate 81, aspartate 97, and aspartate 122. Lysine 162 acts as the Proton acceptor in catalysis.

Belongs to the class I-like SAM-binding methyltransferase superfamily. RNA methyltransferase RlmE family.

The protein localises to the cytoplasm. It carries out the reaction uridine(2552) in 23S rRNA + S-adenosyl-L-methionine = 2'-O-methyluridine(2552) in 23S rRNA + S-adenosyl-L-homocysteine + H(+). Specifically methylates the uridine in position 2552 of 23S rRNA at the 2'-O position of the ribose in the fully assembled 50S ribosomal subunit. This chain is Ribosomal RNA large subunit methyltransferase E, found in Xanthomonas campestris pv. campestris (strain 8004).